An 889-amino-acid polypeptide reads, in one-letter code: Phosphofurin acidic cluster sorting protein 2 (889 aa).

Disordered regions lie at residues 180-246 (DHED…TSMT), 293-463 (LDME…PDAR), and 687-740 (SSAT…SQGV). The span at 343–358 (SHKEPPSPADVPEKTR) shows a compositional bias: basic and acidic residues. A phosphoserine mark is found at serine 390, serine 416, serine 453, serine 691, and serine 694. Low complexity-rich tracts occupy residues 687 to 720 (SSAT…KEAS) and 727 to 737 (PSVSGGLSSPS).

This sequence belongs to the PACS family. Interacts with BID and PKD2. Interacts with SIRT1. Interacts with HDAC1. Interacts with TRPV1. Interacts with WDR37. As to quaternary structure, (Microbial infection) Interacts with HIV-1 Nef. As to expression, broadly expressed, with greatest levels in skeletal muscle followed by heart, brain, pancreas and testis.

The protein localises to the endoplasmic reticulum. The protein resides in the mitochondrion. Its function is as follows. Multifunctional sorting protein that controls the endoplasmic reticulum (ER)-mitochondria communication, including the apposition of mitochondria with the ER and ER homeostasis. In addition, in response to apoptotic inducer, translocates BIB to mitochondria, which initiates a sequence of events including the formation of mitochondrial truncated BID, the release of cytochrome c, the activation of caspase-3 thereby causing cell death. May also be involved in ion channel trafficking, directing acidic cluster-containing ion channels to distinct subcellular compartments. This chain is Phosphofurin acidic cluster sorting protein 2, found in Homo sapiens (Human).